A 495-amino-acid polypeptide reads, in one-letter code: Putative aldehyde dehydrogenase AldA (495 aa).

212 to 218 contacts NAD(+); that stretch reads GKGSESG. Residues glutamate 256 and cysteine 290 contribute to the active site.

Belongs to the aldehyde dehydrogenase family.

It catalyses the reaction an aldehyde + NAD(+) + H2O = a carboxylate + NADH + 2 H(+). The sequence is that of Putative aldehyde dehydrogenase AldA (aldA) from Staphylococcus aureus (strain bovine RF122 / ET3-1).